A 146-amino-acid chain; its full sequence is Hut operon positive regulatory protein (146 aa).

Belongs to the HutP family. In terms of assembly, homohexamer.

Functionally, antiterminator that binds to cis-acting regulatory sequences on the mRNA in the presence of histidine, thereby suppressing transcription termination and activating the hut operon for histidine utilization. The chain is Hut operon positive regulatory protein from Bacillus anthracis (strain CDC 684 / NRRL 3495).